A 447-amino-acid polypeptide reads, in one-letter code: Divalent metal cation transporter MntH (447 aa).

The next 11 membrane-spanning stretches (helical) occupy residues 26–48 (AGFW…GYMD), 65–85 (TLLS…AMSA), 108–128 (GFLL…AEII), 140–160 (IPLI…LLLM), 169–189 (AIVA…VLLS), 212–232 (MLYL…LYLG), 264–284 (LFLA…LFYG), 304–324 (IVGA…LLAS), 359–379 (VLSV…EAKI), 383–403 (LTFS…PLVI), and 426–446 (TATI…LGLI).

The protein belongs to the NRAMP family.

The protein resides in the cell membrane. H(+)-stimulated, divalent metal cation uptake system. This Pediococcus pentosaceus (strain ATCC 25745 / CCUG 21536 / LMG 10740 / 183-1w) protein is Divalent metal cation transporter MntH.